Here is a 233-residue protein sequence, read N- to C-terminus: Ribonuclease 3 (233 aa).

Residues 8–135 form the RNase III domain; the sequence is AQRFLEDKQL…VIGAIYLDQG (128 aa). Mg(2+) is bound at residue glutamate 48. Aspartate 52 is an active-site residue. Residues aspartate 121 and glutamate 124 each coordinate Mg(2+). Glutamate 124 is an active-site residue. The region spanning 161 to 230 is the DRBM domain; sequence DYKSKLQELV…AQKVLQDNLV (70 aa).

This sequence belongs to the ribonuclease III family. As to quaternary structure, homodimer. It depends on Mg(2+) as a cofactor.

It localises to the cytoplasm. It carries out the reaction Endonucleolytic cleavage to 5'-phosphomonoester.. Its function is as follows. Digests double-stranded RNA. Involved in the processing of primary rRNA transcript to yield the immediate precursors to the large and small rRNAs (23S and 16S). Processes some mRNAs, and tRNAs when they are encoded in the rRNA operon. Processes pre-crRNA and tracrRNA of type II CRISPR loci if present in the organism. The protein is Ribonuclease 3 of Syntrophomonas wolfei subsp. wolfei (strain DSM 2245B / Goettingen).